The sequence spans 312 residues: Acyl-CoA C20 Delta5-desaturase (312 aa).

2 helical membrane passes run 45-65 (VFHI…PSTF) and 69-89 (SFWV…TLSF). Fe cation-binding residues include histidine 90, histidine 95, histidine 127, histidine 130, and histidine 131. The Histidine box-1 signature appears at 90–95 (HRNLTH). The Histidine box-2 signature appears at 127-131 (HRYHH). A helical transmembrane segment spans residues 193-213 (LQAALLYLFGGFPFIVWGMAV). Fe cation is bound by residues histidine 230, histidine 259, histidine 262, and histidine 263. The Histidine box-3 motif lies at 259 to 263 (HNNHH).

Belongs to the fatty acid desaturase type 1 family. Fe(2+) is required as a cofactor.

The protein resides in the membrane. The catalysed reaction is (11Z,14Z)-eicosadienoyl-CoA + AH2 + O2 = (5Z,11Z,14Z)-eicosatrienoyl-CoA + A + 2 H2O. It catalyses the reaction (11Z,14Z,17Z)-eicosatrienoyl-CoA + AH2 + O2 = (5Z,11Z,14Z,17Z)-eicosatetraenoyl-CoA + A + 2 H2O. It functions in the pathway lipid metabolism; polyunsaturated fatty acid biosynthesis. Its function is as follows. Catalyzes the desaturation of 20:2Delta(11,14) and 20:3Delta(11,14,17) to generate sciadonic acid (20:3Delta(5,11,14)) and juniperonic acid (20:4Delta(5,11,14,17)). The chain is Acyl-CoA C20 Delta5-desaturase from Anemone leveillei (Windflower).